A 383-amino-acid polypeptide reads, in one-letter code: Transcription factor Y1 (383 aa).

2 consecutive HTH myb-type domains span residues 9–61 and 62–116; these read KVGL…INYL and RADV…SRQI. DNA-binding regions (H-T-H motif) lie at residues 37–61 and 89–112; these read WRSL…INYL and WSLI…NSHL. Residues 136–250 form a disordered region; the sequence is SKLHSAEKRR…DATGPWELDP (115 aa). 2 stretches are compositionally biased toward low complexity: residues 155 to 170 and 191 to 207; these read KSSS…SSKT and ASSP…ASSP.

The protein resides in the nucleus. It functions in the pathway pigment biosynthesis. Functionally, transcription factor involved in regulating the biosynthetic pathway of flavan-4-ol-derived red phlobaphene and red-brown 3-deoxyanthocyanidin (3-DA) pigments. Regulates transcription of chalcone synthase, chalcone isomerase, dihydroflavonol reductase and flavonoid 3'-hydroxylase genes required for the phlobaphene and 3-DA biosynthesis. Transcription of these genes is activated in mesocotyls in response to ingress of non-pathogenic fungus C.heterostrophus. Regulates the production of 3-DA phytoalexins (luteolinidin, 5-methoxyluteolinidin, apigeninidin and 7-methoxyapigeninidin) in mesocotyls in response to C.heterostrophus and corn leaf aphid (CLA) R.maidis. Involved in resistance against anthracnose leaf blight (ALB) caused by the pathogenic C.sublineolum fungus by inducing the production of 3-DA phytoalexins. Confers resistance, also by inducing the production of 3-DA phytoalexins, against CLA R.maidis, which is an insect and a pest. In Sorghum bicolor (Sorghum), this protein is Transcription factor Y1.